Reading from the N-terminus, the 308-residue chain is GDP-L-colitose synthase (308 aa).

NADP(+) is bound by residues 7–13 (GAGGMVG) and 101–104 (LGSS). Tyr-132 serves as the catalytic Proton donor/acceptor. NADP(+) contacts are provided by residues Lys-136, 160–163 (PCNL), and His-176. Positions 184, 199, and 206 each coordinate substrate.

Belongs to the NAD(P)-dependent epimerase/dehydratase family. Fucose synthase subfamily. In terms of assembly, homodimer.

It carries out the reaction GDP-beta-L-colitose + NAD(+) = GDP-4-dehydro-3,6-dideoxy-alpha-D-mannose + NADH + H(+). The enzyme catalyses GDP-beta-L-colitose + NADP(+) = GDP-4-dehydro-3,6-dideoxy-alpha-D-mannose + NADPH + H(+). The protein operates within nucleotide-sugar metabolism; GDP-L-colitose biosynthesis. In terms of biological role, involved in the biosynthesis of the L-colitose (3,6-dideoxyl-L-xylo-hexose) present in the O-antigen region of lipopolysaccharides (LPS) where it serves as antigenic determinant and are vital for bacterial defense and survival. Catalyzes the two-step NADP-dependent conversion of GDP-4-keto-3,6-dideoxy-D-mannose to GDP-L-colitose. ColC is a bifunctional enzyme catalyzing the C-5 epimerization of GDP-4-keto-3,6-dideoxy-D-mannose and the subsequent C-4 keto reduction of the resulting L-epimer to give GDP-L-colitose. It can use both NADP(+) and NAD(+) as electron acceptor, with a slight preference for NADP(+). This is GDP-L-colitose synthase from Yersinia pseudotuberculosis.